Reading from the N-terminus, the 246-residue chain is MyoD family inhibitor domain-containing protein (246 aa).

Positions 1–71 (MSGAGEALAP…WGNPSDGELI (71 aa)) are disordered. Positions 33-43 (KCDKDNTEKDI) are enriched in basic and acidic residues. A compositionally biased stretch (polar residues) spans 44–63 (TQATNSHFTHGEMQDQSIWG). The 173-residue stretch at 74 to 246 (QPQRLPQLQT…MECCGICFPS (173 aa)) folds into the MDFI domain. Phosphoserine occurs at positions 128, 140, and 143.

It belongs to the MDFI family. In terms of assembly, interacts with HAND1; the interaction sequesters HAND1 into the nucleolus and inhibits its activity. Interacts (via C-terminus) with ZIC2. Interacts (via C-terminus) with AXIN1, the histidine-rich region of CCNT1/cyclin-T and weakly with LEF1. Interacts with CCNT2. Interacts with GATA2. Interacts (via C-terminus) with Piezo channel composed of PIEZO1 or PIEZO2; the interaction prolongs Piezo channel inactivation. As to quaternary structure, (Microbial infection) Interacts (via C-terminus) with HIV-1 Tat and Rev. In terms of processing, palmitoylated. As to expression, expressed in lymphatic tissues. Detected in the spleen, thymus, peripheral blood leukocytes as well as prostate, uterus and small intestine. Expressed in lymphatic endothelial cells.

The protein localises to the nucleus. It is found in the nucleolus. It localises to the cytoplasm. The protein resides in the secreted. Functionally, required to control the activity of various transcription factors through their sequestration in the cytoplasm. Retains nuclear Zic proteins ZIC1, ZIC2 and ZIC3 in the cytoplasm and inhibits their transcriptional activation. Modulates the expression from cellular promoters. Binds to the axin complex, resulting in an increase in the level of free beta-catenin. Affects axin regulation of the WNT and JNK signaling pathways. Involved in the development of lymphatic vessel valves. Required to promote lymphatic endothelial cell migration, in a process that involves down-regulation of integrin beta 1 activation and control of cell adhesion to the extracellular matrix. Regulates the activity of mechanosensitive Piezo channel. (Microbial infection) Modulates the expression from viral promoters. Down-regulates Tat-dependent transcription of the human immunodeficiency virus type 1 (HIV-1) LTR by interacting with HIV-1 Tat and Rev and impairing their nuclear import, probably by rendering the NLS domains inaccessible to importin-beta. Also stimulates activation of human T-cell leukemia virus type I (HTLV-I) LTR. The sequence is that of MyoD family inhibitor domain-containing protein from Homo sapiens (Human).